Consider the following 814-residue polypeptide: Outer membrane usher protein SefC (814 aa).

A signal peptide spans 1–30; sequence MKKTTITLFVLTSVFHSGNVFSRQYNFDYG. Cysteines 792 and 813 form a disulfide.

Belongs to the fimbrial export usher family.

It is found in the cell outer membrane. Its function is as follows. Involved in the export and assembly of the SefA fimbrial subunit. In Salmonella enteritidis, this protein is Outer membrane usher protein SefC (sefC).